Consider the following 396-residue polypeptide: 1-deoxy-D-xylulose 5-phosphate reductoisomerase (396 aa).

NADPH-binding residues include Thr-13, Gly-14, Ser-15, Ile-16, and Asn-127. Lys-128 contributes to the 1-deoxy-D-xylulose 5-phosphate binding site. Glu-129 lines the NADPH pocket. Asp-153 is a Mn(2+) binding site. Residues Ser-154, Glu-155, Ser-184, and His-207 each contribute to the 1-deoxy-D-xylulose 5-phosphate site. Glu-155 lines the Mn(2+) pocket. Gly-213 is a binding site for NADPH. 4 residues coordinate 1-deoxy-D-xylulose 5-phosphate: Ser-220, Asn-225, Lys-226, and Glu-229. Residue Glu-229 coordinates Mn(2+).

The protein belongs to the DXR family. Requires Mg(2+) as cofactor. The cofactor is Mn(2+).

It carries out the reaction 2-C-methyl-D-erythritol 4-phosphate + NADP(+) = 1-deoxy-D-xylulose 5-phosphate + NADPH + H(+). The protein operates within isoprenoid biosynthesis; isopentenyl diphosphate biosynthesis via DXP pathway; isopentenyl diphosphate from 1-deoxy-D-xylulose 5-phosphate: step 1/6. Functionally, catalyzes the NADPH-dependent rearrangement and reduction of 1-deoxy-D-xylulose-5-phosphate (DXP) to 2-C-methyl-D-erythritol 4-phosphate (MEP). This Pseudomonas aeruginosa (strain UCBPP-PA14) protein is 1-deoxy-D-xylulose 5-phosphate reductoisomerase.